Reading from the N-terminus, the 519-residue chain is Sodium-dependent dicarboxylate transporter SdcS (519 aa).

The next 14 helical transmembrane spans lie at 29 to 49 (VGQL…LLLF), 59 to 79 (VFVL…AIPI), 103 to 123 (AQYG…AIAM), 136 to 156 (IINT…IATG), 159 to 179 (SMFV…LAII), 201 to 221 (ALVL…LIGT), 241 to 261 (FAKW…LVWI), 297 to 317 (KVVL…EFLL), 322 to 342 (FTSE…LFLI), 362 to 382 (LPWG…GISE), 395 to 415 (LIEG…VLFL), 428 to 448 (ILPI…LLMV), 451 to 471 (AMAA…AIVF), and 490 to 510 (LLSI…VLGI).

This sequence belongs to the SLC13A/DASS transporter (TC 2.A.47) family. NADC subfamily.

The protein resides in the cell membrane. Its function is as follows. Mediates the transport of dicarboxylates across the cytoplasmic membrane via a Na(+)-electrochemical gradient. The sequence is that of Sodium-dependent dicarboxylate transporter SdcS (sdcS) from Staphylococcus saprophyticus subsp. saprophyticus (strain ATCC 15305 / DSM 20229 / NCIMB 8711 / NCTC 7292 / S-41).